A 502-amino-acid chain; its full sequence is Protein Dok-7 (502 aa).

One can recognise a PH domain in the interval 4 to 109 (SVVVEGYARL…WDARLRYSLG (106 aa)). Residues 105–210 (RYSLGEVHRF…RGISPTRGPF (106 aa)) enclose the IRS-type PTB domain. Disordered stretches follow at residues 210–232 (FGLR…RLNH), 249–279 (STAS…SDCS), 291–358 (TSIQ…GSFS), and 418–482 (EVGG…GHPG). Composition is skewed to low complexity over residues 264-279 (ISGS…SDCS) and 301-316 (AGAK…PLPS). Residues 336–346 (GRQSSSDSGIA) are compositionally biased toward polar residues. Residues 347–358 (TGSHSSYSGSFS) show a composition bias toward low complexity. A compositionally biased stretch (basic and acidic residues) spans 459-473 (PNEHFRSPSESKKSS).

It is found in the cell membrane. The protein resides in the synapse. In terms of biological role, probable muscle-intrinsic activator of MUSK that plays an essential role in neuromuscular synaptogenesis. Acts in aneural activation of MUSK and subsequent acetylcholine receptor (AchR) clustering in myotubes. In Takifugu rubripes (Japanese pufferfish), this protein is Protein Dok-7 (dok7).